Consider the following 400-residue polypeptide: Formate-dependent phosphoribosylglycinamide formyltransferase (400 aa).

N(1)-(5-phospho-beta-D-ribosyl)glycinamide contacts are provided by residues 22-23 (EL) and glutamate 82. Residues arginine 115, lysine 157, 162–167 (SSGKGQ), 197–200 (EGFI), and glutamate 205 each bind ATP. The region spanning 120–315 (RLAAETLGVP…EFELHARAIL (196 aa)) is the ATP-grasp domain. Mg(2+) is bound by residues glutamate 274 and glutamate 286. Residues aspartate 293, lysine 362, and 369–370 (RR) contribute to the N(1)-(5-phospho-beta-D-ribosyl)glycinamide site.

Belongs to the PurK/PurT family. Homodimer.

It catalyses the reaction N(1)-(5-phospho-beta-D-ribosyl)glycinamide + formate + ATP = N(2)-formyl-N(1)-(5-phospho-beta-D-ribosyl)glycinamide + ADP + phosphate + H(+). It participates in purine metabolism; IMP biosynthesis via de novo pathway; N(2)-formyl-N(1)-(5-phospho-D-ribosyl)glycinamide from N(1)-(5-phospho-D-ribosyl)glycinamide (formate route): step 1/1. In terms of biological role, involved in the de novo purine biosynthesis. Catalyzes the transfer of formate to 5-phospho-ribosyl-glycinamide (GAR), producing 5-phospho-ribosyl-N-formylglycinamide (FGAR). Formate is provided by PurU via hydrolysis of 10-formyl-tetrahydrofolate. This chain is Formate-dependent phosphoribosylglycinamide formyltransferase, found in Variovorax paradoxus (strain S110).